A 195-amino-acid polypeptide reads, in one-letter code: 2-amino-4-hydroxy-6-hydroxymethyldihydropteridine pyrophosphokinase (195 aa).

This sequence belongs to the HPPK family.

It carries out the reaction 6-hydroxymethyl-7,8-dihydropterin + ATP = (7,8-dihydropterin-6-yl)methyl diphosphate + AMP + H(+). Its pathway is cofactor biosynthesis; tetrahydrofolate biosynthesis; 2-amino-4-hydroxy-6-hydroxymethyl-7,8-dihydropteridine diphosphate from 7,8-dihydroneopterin triphosphate: step 4/4. Functionally, catalyzes the transfer of pyrophosphate from adenosine triphosphate (ATP) to 6-hydroxymethyl-7,8-dihydropterin, an enzymatic step in folate biosynthesis pathway. This chain is 2-amino-4-hydroxy-6-hydroxymethyldihydropteridine pyrophosphokinase (folK), found in Synechocystis sp. (strain ATCC 27184 / PCC 6803 / Kazusa).